The primary structure comprises 90 residues: Probable Fe(2+)-trafficking protein (90 aa).

Belongs to the Fe(2+)-trafficking protein family.

In terms of biological role, could be a mediator in iron transactions between iron acquisition and iron-requiring processes, such as synthesis and/or repair of Fe-S clusters in biosynthetic enzymes. This Aliivibrio fischeri (strain ATCC 700601 / ES114) (Vibrio fischeri) protein is Probable Fe(2+)-trafficking protein.